A 186-amino-acid chain; its full sequence is Tumor necrosis factor, alpha-induced protein 8-like protein 2 A (186 aa).

Belongs to the TNFAIP8 family. TNFAIP8L2 subfamily.

Functionally, acts as a negative regulator of innate and adaptive immunity by maintaining immune homeostasis. Negative regulator of Toll-like receptor and T-cell receptor function. Prevents hyperresponsiveness of the immune system and maintains immune homeostasis. Inhibits jun/ap1 and NF-kappa-B activation. Promotes Fas-induced apoptosis. This Danio rerio (Zebrafish) protein is Tumor necrosis factor, alpha-induced protein 8-like protein 2 A (tnfaip8l2a).